Reading from the N-terminus, the 370-residue chain is Myomodulin neuropeptides 1 (370 aa).

Positions 1 to 18 (MQVYMLLPLAVFASLTYQ) are cleaved as a signal peptide. The propeptide occupies 19-50 (GACEETAAAQTSSDASTSSASSEHAENELSRA). Residues 28–40 (QTSSDASTSSASS) show a composition bias toward low complexity. Positions 28–52 (QTSSDASTSSASSEHAENELSRAKR) are disordered. A leucine amide mark is found at Leu60 and Leu69. Positions 73-190 (GGPVEPESEE…EPEEGGLGEE (118 aa)) are excised as a propeptide. 2 positions are modified to leucine amide: Leu199 and Leu209. The span at 210 to 226 (GKREGEEGDEMDKKQDE) shows a compositional bias: basic and acidic residues. The interval 210-230 (GKREGEEGDEMDKKQDESLND) is disordered. Residues 213 to 237 (EGEEGDEMDKKQDESLNDDFENDDI) constitute a propeptide that is removed on maturation. A leucine amide mark is found at Leu246, Leu256, Leu266, Leu276, Leu286, Leu296, Leu306, Leu316, Leu326, Leu336, and Leu346. The disordered stretch occupies residues 344–370 (LRLGKRDDDEKEKKSLNMSRLGKRSTQ). The segment covering 347-358 (GKRDDDEKEKKS) has biased composition (basic and acidic residues). Positions 350–355 (DDDEKE) are excised as a propeptide. Leu364 carries the leucine amide modification. Positions 368-370 (STQ) are excised as a propeptide.

As to expression, expressed in all ganglia of the CNS, but only in a subset of neurons including L10 in the abdominal ganglion and B16 in the buccal ganglion.

The protein localises to the secreted. Its function is as follows. Exogenous application of myomodulins potentiates ARC muscle contraction. This is Myomodulin neuropeptides 1 (MYOMOD1) from Aplysia californica (California sea hare).